The primary structure comprises 124 residues: UPF0344 protein OB1184 (124 aa).

Helical transmembrane passes span 3–23, 33–53, 62–82, and 104–124; these read HMHI…LVMY, IIHM…GILT, MPIL…VAMM, and IALV…FLFI.

The protein belongs to the UPF0344 family.

It localises to the cell membrane. In Oceanobacillus iheyensis (strain DSM 14371 / CIP 107618 / JCM 11309 / KCTC 3954 / HTE831), this protein is UPF0344 protein OB1184.